The sequence spans 110 residues: Small ribosomal subunit protein bS16 (110 aa).

A disordered region spans residues 84–110; that stretch reads KRTARNNPEKAVPRKERKAQAEAAAKS. The segment covering 90–103 has biased composition (basic and acidic residues); it reads NPEKAVPRKERKAQ.

This sequence belongs to the bacterial ribosomal protein bS16 family.

This Nitrobacter hamburgensis (strain DSM 10229 / NCIMB 13809 / X14) protein is Small ribosomal subunit protein bS16.